Consider the following 416-residue polypeptide: Polyadenylation and cleavage factor homolog 1 (416 aa).

Polar residues predominate over residues 1–17 (MASNGSFSAQRNANART). Residues 1–80 (MASNGSFSAQ…NNNNVSRVSS (80 aa)) form a disordered region. The segment covering 70–80 (SNNNNVSRVSS) has biased composition (low complexity). Residues 199 to 220 (KELTDLLSLLNNEKEKKTLEAS) are a coiled coil. The C2H2-type zinc finger occupies 254 to 276 (RQCSSCGLRFKCQEEHSKHMDWH).

In terms of assembly, forms a complex with cleavage and polyadenylation specificity factor (CPSF) subunits CLPS3, CLPS5, CPSF30, PCFS4, PCFS5, CSTF77 and FIPS3.

The protein resides in the nucleus. The polypeptide is Polyadenylation and cleavage factor homolog 1 (Arabidopsis thaliana (Mouse-ear cress)).